Reading from the N-terminus, the 339-residue chain is Dihydroorotate dehydrogenase (quinone) (339 aa).

FMN is bound by residues 62–66 (AGMDK) and T86. K66 provides a ligand contact to substrate. 111-115 (NRMGF) contacts substrate. FMN contacts are provided by N139 and N172. N172 contributes to the substrate binding site. Residue S175 is the Nucleophile of the active site. N177 serves as a coordination point for substrate. 2 residues coordinate FMN: K217 and T245. 246–247 (NT) serves as a coordination point for substrate. FMN contacts are provided by residues G268, G297, and 318–319 (YS).

It belongs to the dihydroorotate dehydrogenase family. Type 2 subfamily. Monomer. FMN serves as cofactor.

The protein localises to the cell membrane. It catalyses the reaction (S)-dihydroorotate + a quinone = orotate + a quinol. It participates in pyrimidine metabolism; UMP biosynthesis via de novo pathway; orotate from (S)-dihydroorotate (quinone route): step 1/1. In terms of biological role, catalyzes the conversion of dihydroorotate to orotate with quinone as electron acceptor. The chain is Dihydroorotate dehydrogenase (quinone) from Shewanella pealeana (strain ATCC 700345 / ANG-SQ1).